The primary structure comprises 293 residues: Nucleotide-binding protein OB2468 (293 aa).

14–21 contacts ATP; it reads GMSGAGKT. 65–68 contributes to the GTP binding site; the sequence is DLRG.

The protein belongs to the RapZ-like family.

Functionally, displays ATPase and GTPase activities. In Oceanobacillus iheyensis (strain DSM 14371 / CIP 107618 / JCM 11309 / KCTC 3954 / HTE831), this protein is Nucleotide-binding protein OB2468.